An 876-amino-acid chain; its full sequence is MSKSTAEIRQAFLDFFHSKGHQVVASSSLVPNNDPTLLFTNAGMNQFKDVFLGLDKRNYSRATTSQRCVRAGGKHNDLENVGYTARHHTFFEMLGNFSFGDYFKHDAIQFAWELLTGENWFALPKERLWVTVYETDDEAYEIWEKEVGIPRERIIRIGDNKGAPYASDNFWQMGDTGPCGPCTEIFYDHGDHIWGGPPGSPEEDGDRYIEIWNIVFMQFNRQADGTMEPLPKPSVDTGMGLERIAAVLQHVNSNYDIDLFRTLIEAVAKVTGATDLGNKSLRVIADHIRSCAFLVADGVLPSNENRGYVLRRIIRRAVRHGNMLGAKETFFYKLVGPLIEVMGSAGEELKRQQAQVEQVLKTEEEQFARTLERGLALLDEELAKLQGDTLDGETAFRLYDTYGFPVDLTADVCRERNIKVDEAGFEAAMEEQRRRAREASGFGADYNAMIRVDSASEFKGYDHLELNGKVTALFVDGKAVEAINAGQEAVVVLDQTPFYAESGGQVGDKGELKGAGFTFAVDDTQKYGQAIGHLGKLSAGALKVGDAVQADVDEARRARIRLNHSATHLMHAALRQVLGTHVAQKGSLVSDKVLRFDFSHNEAMKPSEIREVEDLVNAQIRRNLPIETNIMDLDAAKAKGAMALFGEKYDERVRVLSMGDFSTELCGGTHASRTGDIGLFRIISESGTAAGIRRIEAVTGEGAMATVHAQSDRLNDIAHLLKGDSQNLGDKVRAVLERTRQLEKELQQLKDQAAAQESANLSSKAVDLNGVKLLVSELAGIEPKMLRTMVDDLKNQLGSTVIVLATVVEGKVSLIAGVSKDVTDRVKAGELIGMVAQQVGGKGGGRPDMAQAGGTDAAALPAALASVQGWVSAKLQ.

Zn(2+)-binding residues include His564, His568, Cys666, and His670.

This sequence belongs to the class-II aminoacyl-tRNA synthetase family. As to quaternary structure, homotetramer. The cofactor is Zn(2+).

The protein resides in the cytoplasm. The enzyme catalyses tRNA(Ala) + L-alanine + ATP = L-alanyl-tRNA(Ala) + AMP + diphosphate. Functionally, catalyzes the attachment of alanine to tRNA(Ala) in a two-step reaction: alanine is first activated by ATP to form Ala-AMP and then transferred to the acceptor end of tRNA(Ala). Also edits incorrectly charged Ser-tRNA(Ala) and Gly-tRNA(Ala) via its editing domain. The protein is Alanine--tRNA ligase of Salmonella typhimurium (strain LT2 / SGSC1412 / ATCC 700720).